The chain runs to 607 residues: Chaperone protein HtpG (607 aa).

Residues 1–323 form an a; substrate-binding region; it reads MKKEEKIFKA…CDSLSLNISR (323 aa). The tract at residues 324-534 is b; the sequence is EILQQNAELQ…KGGLSLEMEK (211 aa). The tract at residues 535–607 is c; sequence TLSEMTNNND…FIKNLNSLIK (73 aa).

It belongs to the heat shock protein 90 family. As to quaternary structure, homodimer.

It localises to the cytoplasm. In terms of biological role, molecular chaperone. Has ATPase activity. This chain is Chaperone protein HtpG, found in Fusobacterium nucleatum subsp. nucleatum (strain ATCC 25586 / DSM 15643 / BCRC 10681 / CIP 101130 / JCM 8532 / KCTC 2640 / LMG 13131 / VPI 4355).